The primary structure comprises 635 residues: Phosphomethylpyrimidine synthase (635 aa).

A compositionally biased stretch (polar residues) spans M1–P14. The interval M1 to S41 is disordered. Residues N240, M269, Y298, H334, S354 to G356, D395 to R398, and E434 each bind substrate. Position 438 (H438) interacts with Zn(2+). Residue Y461 coordinates substrate. A Zn(2+)-binding site is contributed by H502. [4Fe-4S] cluster contacts are provided by C582, C585, and C590.

The protein belongs to the ThiC family. As to quaternary structure, homodimer. [4Fe-4S] cluster serves as cofactor.

The catalysed reaction is 5-amino-1-(5-phospho-beta-D-ribosyl)imidazole + S-adenosyl-L-methionine = 4-amino-2-methyl-5-(phosphooxymethyl)pyrimidine + CO + 5'-deoxyadenosine + formate + L-methionine + 3 H(+). Its pathway is cofactor biosynthesis; thiamine diphosphate biosynthesis. Its function is as follows. Catalyzes the synthesis of the hydroxymethylpyrimidine phosphate (HMP-P) moiety of thiamine from aminoimidazole ribotide (AIR) in a radical S-adenosyl-L-methionine (SAM)-dependent reaction. This is Phosphomethylpyrimidine synthase from Nitrosospira multiformis (strain ATCC 25196 / NCIMB 11849 / C 71).